Consider the following 284-residue polypeptide: Pantothenate synthetase (284 aa).

30-37 (MGNLHDGH) is an ATP binding site. Catalysis depends on His-37, which acts as the Proton donor. (R)-pantoate is bound at residue Gln-61. Gln-61 contributes to the beta-alanine binding site. Residue 149–152 (GEKD) participates in ATP binding. Gln-155 is a binding site for (R)-pantoate. ATP-binding positions include Ile-178 and 186–189 (LSSR).

It belongs to the pantothenate synthetase family. As to quaternary structure, homodimer.

The protein resides in the cytoplasm. It catalyses the reaction (R)-pantoate + beta-alanine + ATP = (R)-pantothenate + AMP + diphosphate + H(+). Its pathway is cofactor biosynthesis; (R)-pantothenate biosynthesis; (R)-pantothenate from (R)-pantoate and beta-alanine: step 1/1. Functionally, catalyzes the condensation of pantoate with beta-alanine in an ATP-dependent reaction via a pantoyl-adenylate intermediate. The chain is Pantothenate synthetase from Salmonella heidelberg (strain SL476).